We begin with the raw amino-acid sequence, 299 residues long: Protein FAM228A (299 aa).

The tract at residues 135–201 (AKGTSYQHGR…GRNRYKGASS (67 aa)) is disordered. A compositionally biased stretch (basic and acidic residues) spans 146–159 (KTHDTQKEAKETEK). The residue at position 264 (Ser264) is a Phosphoserine.

The protein belongs to the FAM228 family.

The polypeptide is Protein FAM228A (Fam228a) (Mus musculus (Mouse)).